Consider the following 604-residue polypeptide: MSEHDMQNTNPPLPPLPPEITQLLSGLDAAQWAWLSGYAWAKAGNGASAGLPALQTALPAAEPFSVTVLSASQTGNAKSVADKAADSLEAAGIQVSRAELKDYKAKNIAGERRLLLVTSTQGEGEPPKEAVVLHKLLNGKKAPKLDKLQFAVLGLGDSSYPNFCQAGKDFDRRFEELGAKRLLERVDADLDFTASANAWTDNIAALLKEEAAKNRATPAPQTTPPAGLQTAPDGRYCKAAPFPAALLANQKITARQSDKDVRHIEIDLSGSDLHYLPGDALGVWFDNDPALVREILDLLGIDPATEIQAGGKMMPVARALSSHFELTQNTPAFVKGYAAFAHYEELDKIIADNAVLQDFVQNTPIVDVLHRFPASLTAEQFIRLLRPLAPRLYSISSAQAEVGDEVHLTVGVVRFEHEGRARTGGASGFLADRLEEDGTVRVFVERNDGFRLPEDSRKPIVMIGSGTGVAPFRAFVQQRAAENAEGKNWLIFGNPHFARDFLYQTEWQQFAKDGFLHRYDFAWSRDQEEKIYVQDKIREQAEGLWQWLQEGAHIYVCGDAAKMAKDVEAALLDVIIGAGHLDEEGAEEYLDMLREEKRYQRDVY.

Residues 66–204 (VTVLSASQTG…SANAWTDNIA (139 aa)) enclose the Flavodoxin-like domain. FMN contacts are provided by residues 72–77 (SQTGNA), 119–122 (STQG), and 155–164 (LGDSSYPNFC). Positions 239–453 (AAPFPAALLA…VERNDGFRLP (215 aa)) constitute an FAD-binding FR-type domain. FAD is bound by residues T327, Q361, 391-394 (RLYS), 409-411 (TVG), and 424-427 (GGAS). Residues 524-525 (SR), 530-534 (KIYVQ), and D566 each bind NADP(+). Y604 is an FAD binding site.

Belongs to the NADPH-dependent sulphite reductase flavoprotein subunit CysJ family. The protein in the N-terminal section; belongs to the flavodoxin family. This sequence in the C-terminal section; belongs to the flavoprotein pyridine nucleotide cytochrome reductase family. Alpha(8)-beta(8). The alpha component is a flavoprotein, the beta component is a hemoprotein. The cofactor is FAD. Requires FMN as cofactor.

The enzyme catalyses hydrogen sulfide + 3 NADP(+) + 3 H2O = sulfite + 3 NADPH + 4 H(+). The protein operates within sulfur metabolism; hydrogen sulfide biosynthesis; hydrogen sulfide from sulfite (NADPH route): step 1/1. Component of the sulfite reductase complex that catalyzes the 6-electron reduction of sulfite to sulfide. This is one of several activities required for the biosynthesis of L-cysteine from sulfate. The flavoprotein component catalyzes the electron flow from NADPH -&gt; FAD -&gt; FMN to the hemoprotein component. This chain is Sulfite reductase [NADPH] flavoprotein alpha-component, found in Neisseria meningitidis serogroup B (strain ATCC BAA-335 / MC58).